The primary structure comprises 430 residues: Target of rapamycin complex 1 subunit toc1 (430 aa).

Phosphoserine is present on residues serine 204 and serine 399.

As to quaternary structure, the target of rapamycin complex 1 (TORC1) is composed of at least mip1, pop3/wat1, tco89, toc1 and tor2.

The protein resides in the cytoplasm. Component of TORC1, which regulates multiple cellular processes to control cell growth in response to environmental signals. Tor2 is essential for growth. Nutrient limitation and environmental stress signals cause inactivation of TORC1. Active TORC1 positively controls cell growth and ribosome biogenesis by regulating ribosomal protein gene expression. TORC1 negatively controls G1 cell-cycle arrest, sexual development and amino acid uptake. Represses mating, meiosis and sporulation efficiency by interfering with the functions of the transcription factor ste11 and the meiosis-promoting RNA-binding protein mei2. This Schizosaccharomyces pombe (strain 972 / ATCC 24843) (Fission yeast) protein is Target of rapamycin complex 1 subunit toc1.